The following is a 25-amino-acid chain: Defensin D3 (25 aa).

It belongs to the DEFL family. Group IV subfamily. Distributed in the epidermal cell layer of leaves and in the subepidermal layer region of stems. Not in roots.

The protein resides in the secreted. It is found in the cell wall. In terms of biological role, antimicrobial peptide. Active against Fusarium spp., Gram-positive and Gram-negative bacterial pathogens. The polypeptide is Defensin D3 (Spinacia oleracea (Spinach)).